A 607-amino-acid chain; its full sequence is Thymidine kinase (607 aa).

2 disordered regions span residues 1–160 and 180–215; these read MAGF…ADST and DDKS…PSGL. Basic and acidic residues predominate over residues 17-32; that stretch reads KCQEDESPENERHENF. Composition is skewed to polar residues over residues 88–106, 148–160, and 194–203; these read AAVT…TSCP, RKTS…ADST, and RRPSSHSALK. 291 to 298 lines the ATP pocket; sequence GAPGVGKT. Glu-317 serves as the catalytic Proton acceptor. Gln-355 serves as a coordination point for substrate. Arg-445 is a binding site for ATP. Arg-451 provides a ligand contact to substrate.

Belongs to the herpesviridae thymidine kinase family. In terms of assembly, homodimer.

It localises to the virion tegument. The protein localises to the host nucleus. The catalysed reaction is thymidine + ATP = dTMP + ADP + H(+). In terms of biological role, catalyzes the transfer of the gamma-phospho group of ATP to thymidine to generate dTMP in the salvage pathway of pyrimidine synthesis. The dTMP serves as a substrate for DNA polymerase during viral DNA replication. Allows the virus to be reactivated and to grow in non-proliferative cells lacking a high concentration of phosphorylated nucleic acid precursors. The protein is Thymidine kinase of Homo sapiens (Human).